Consider the following 454-residue polypeptide: Protection of telomeres protein 1b (454 aa).

This sequence belongs to the telombin family. In terms of assembly, interacts with TRB1, TRB2 and TRB3. In terms of tissue distribution, expressed at low levels in roots, rosette leaves, cauline leaves, stems and flowers.

Its subcellular location is the nucleus. The protein resides in the chromosome. The protein localises to the telomere. In terms of biological role, negatively regulates telomerase activity and participates in chromosome end protection. Binds RNA non-specifically. Associates with a regulatory Pol III-dependent lncRNA, which represses telomerase activity in response to DNA damage. Binds single-stranded telomeric DNA with weak affinity. In Arabidopsis thaliana (Mouse-ear cress), this protein is Protection of telomeres protein 1b.